We begin with the raw amino-acid sequence, 809 residues long: Ribonuclease Z 1 (809 aa).

Residues 74–93 (ISSPDTYDSSSSSSTTSVSD) form a disordered region.

Belongs to the RNase Z family. Requires Zn(2+) as cofactor.

It is found in the nucleus. It localises to the cytoplasm. The catalysed reaction is Endonucleolytic cleavage of RNA, removing extra 3' nucleotides from tRNA precursor, generating 3' termini of tRNAs. A 3'-hydroxy group is left at the tRNA terminus and a 5'-phosphoryl group is left at the trailer molecule.. In terms of biological role, zinc phosphodiesterase, which displays some tRNA 3'-processing endonuclease activity. May be involved in tRNA maturation, by removing a 3'-trailer from precursor tRNA. The chain is Ribonuclease Z 1 (trz1) from Schizosaccharomyces pombe (strain 972 / ATCC 24843) (Fission yeast).